The sequence spans 476 residues: ATP sulfurylase 2 (476 aa).

The N-terminal 56 residues, 1 to 56 (MSLMIRSSYVSHITLFQPRNSKPSSFTNQISFLSSSNNNPFLNLVYKRNLTMQSVS), are a transit peptide targeting the chloroplast.

It belongs to the sulfate adenylyltransferase family. As to quaternary structure, homotetramer. As to expression, mostly expressed in leaves or cotyledons.

It localises to the plastid. The protein resides in the chloroplast. Its subcellular location is the cytoplasm. It catalyses the reaction sulfate + ATP + H(+) = adenosine 5'-phosphosulfate + diphosphate. Its pathway is sulfur metabolism; hydrogen sulfide biosynthesis; sulfite from sulfate: step 1/3. This is ATP sulfurylase 2 (APS2) from Arabidopsis thaliana (Mouse-ear cress).